A 106-amino-acid polypeptide reads, in one-letter code: Integration host factor subunit alpha (106 aa).

The protein belongs to the bacterial histone-like protein family. In terms of assembly, heterodimer of an alpha and a beta chain.

Functionally, this protein is one of the two subunits of integration host factor, a specific DNA-binding protein that functions in genetic recombination as well as in transcriptional and translational control. This is Integration host factor subunit alpha from Paramagnetospirillum magneticum (strain ATCC 700264 / AMB-1) (Magnetospirillum magneticum).